The primary structure comprises 336 residues: Tyrosine recombinase XerC (336 aa).

The 93-residue stretch at 14 to 106 folds into the Core-binding (CB) domain; it reads VARCRWLEPF…SVKSFYRFLL (93 aa). The region spanning 127–330 is the Tyr recombinase domain; sequence KVPRFVSEEE…TFSRLKEIYD (204 aa). Catalysis depends on residues Arg183, Lys207, His282, Arg285, and His308. Catalysis depends on Tyr317, which acts as the O-(3'-phospho-DNA)-tyrosine intermediate.

Belongs to the 'phage' integrase family. XerC subfamily. In terms of assembly, forms a cyclic heterotetrameric complex composed of two molecules of XerC and two molecules of XerD.

The protein resides in the cytoplasm. Site-specific tyrosine recombinase, which acts by catalyzing the cutting and rejoining of the recombining DNA molecules. The XerC-XerD complex is essential to convert dimers of the bacterial chromosome into monomers to permit their segregation at cell division. It also contributes to the segregational stability of plasmids. This is Tyrosine recombinase XerC from Chlorobaculum parvum (strain DSM 263 / NCIMB 8327) (Chlorobium vibrioforme subsp. thiosulfatophilum).